We begin with the raw amino-acid sequence, 198 residues long: MPDSALPPCSILLLAGGRGQRMGGRDKGLIEWQGLPLIAHLHRLVRPLTDDLIVSCNRNQERYAAYADRVVSDDSRDFPGPLAGIRAGLAVARHPWLLVLPCDAPRIDRALLETLLQAAGRTPARPWMLRCGGQWEPLFSLIPTHLAEEIEHAWRQGDRSPRHVLLPLGAEAIELAAGDPRLANLNTPELLANHRELK.

Residues 14 to 16 (LAG), Lys27, Asp73, and Asp103 each bind GTP. Asp103 is a Mg(2+) binding site.

The protein belongs to the MobA family. In terms of assembly, monomer. Mg(2+) is required as a cofactor.

The protein localises to the cytoplasm. It catalyses the reaction Mo-molybdopterin + GTP + H(+) = Mo-molybdopterin guanine dinucleotide + diphosphate. Its function is as follows. Transfers a GMP moiety from GTP to Mo-molybdopterin (Mo-MPT) cofactor (Moco or molybdenum cofactor) to form Mo-molybdopterin guanine dinucleotide (Mo-MGD) cofactor. This chain is Molybdenum cofactor guanylyltransferase, found in Pseudomonas aeruginosa (strain ATCC 15692 / DSM 22644 / CIP 104116 / JCM 14847 / LMG 12228 / 1C / PRS 101 / PAO1).